A 481-amino-acid chain; its full sequence is Glycogen synthase (481 aa).

Lys-16 serves as a coordination point for ADP-alpha-D-glucose.

It belongs to the glycosyltransferase 1 family. Bacterial/plant glycogen synthase subfamily.

It catalyses the reaction [(1-&gt;4)-alpha-D-glucosyl](n) + ADP-alpha-D-glucose = [(1-&gt;4)-alpha-D-glucosyl](n+1) + ADP + H(+). The protein operates within glycan biosynthesis; glycogen biosynthesis. Synthesizes alpha-1,4-glucan chains using ADP-glucose. The sequence is that of Glycogen synthase from Cellvibrio japonicus (strain Ueda107) (Pseudomonas fluorescens subsp. cellulosa).